A 402-amino-acid polypeptide reads, in one-letter code: MKRTFILMMDSFGIGAAADADKFGDVGANTLGHIAKACAAGEIEGRGALNLPNLSKLGLGHAGELASGTFPAGLNKDIDVVGAYGFAQELSSGKDTPSGHWEIAGVPVLFEWGYFHDHHNSFPQELLDAIVEKAGLPGYLGNCHASGTQVLDDLGEEHMRTGKPILYTSADSVFQIACHEETYGLEKLYELCHIVRELLEPYNIGRVIARPFVGSGKGNFKRTGNRHDYSVLPPAPTVLDYMKEAGGQVVSIGKIADIYAQQGITKQVKGTGLTELWDRTLEEVKAAGDQTIVFTNFVDFDSSYGHRRDVKGYADALEYFDSRLPELFELLEDGDVVVLTADHGCDPTWGGTDHTREYIPVLFYGKPVKAGSVGRRETFADIGQSIAAYHGLPKLAYGTSFL.

Mn(2+) contacts are provided by aspartate 10, aspartate 301, histidine 306, aspartate 342, histidine 343, and histidine 354.

This sequence belongs to the phosphopentomutase family. Mn(2+) serves as cofactor.

The protein localises to the cytoplasm. It carries out the reaction 2-deoxy-alpha-D-ribose 1-phosphate = 2-deoxy-D-ribose 5-phosphate. The enzyme catalyses alpha-D-ribose 1-phosphate = D-ribose 5-phosphate. It participates in carbohydrate degradation; 2-deoxy-D-ribose 1-phosphate degradation; D-glyceraldehyde 3-phosphate and acetaldehyde from 2-deoxy-alpha-D-ribose 1-phosphate: step 1/2. In terms of biological role, isomerase that catalyzes the conversion of deoxy-ribose 1-phosphate (dRib-1-P) and ribose 1-phosphate (Rib-1-P) to deoxy-ribose 5-phosphate (dRib-5-P) and ribose 5-phosphate (Rib-5-P), respectively. This is Phosphopentomutase from Aeromonas hydrophila subsp. hydrophila (strain ATCC 7966 / DSM 30187 / BCRC 13018 / CCUG 14551 / JCM 1027 / KCTC 2358 / NCIMB 9240 / NCTC 8049).